A 327-amino-acid polypeptide reads, in one-letter code: tRNA uridine(34) hydroxylase (327 aa).

One can recognise a Rhodanese domain in the interval 122 to 218 (QENRCLVLDV…YGLKMGTGKW (97 aa)). C178 serves as the catalytic Cysteine persulfide intermediate.

This sequence belongs to the TrhO family.

It carries out the reaction uridine(34) in tRNA + AH2 + O2 = 5-hydroxyuridine(34) in tRNA + A + H2O. Functionally, catalyzes oxygen-dependent 5-hydroxyuridine (ho5U) modification at position 34 in tRNAs. The protein is tRNA uridine(34) hydroxylase of Chlamydia trachomatis serovar A (strain ATCC VR-571B / DSM 19440 / HAR-13).